The following is a 354-amino-acid chain: Methylthioribose-1-phosphate isomerase (354 aa).

Substrate contacts are provided by residues 58-60, arginine 101, and glutamine 204; that span reads RGA. The Proton donor role is filled by aspartate 245. A substrate-binding site is contributed by 255 to 256; sequence NK.

The protein belongs to the eIF-2B alpha/beta/delta subunits family. MtnA subfamily.

It carries out the reaction 5-(methylsulfanyl)-alpha-D-ribose 1-phosphate = 5-(methylsulfanyl)-D-ribulose 1-phosphate. The protein operates within amino-acid biosynthesis; L-methionine biosynthesis via salvage pathway; L-methionine from S-methyl-5-thio-alpha-D-ribose 1-phosphate: step 1/6. In terms of biological role, catalyzes the interconversion of methylthioribose-1-phosphate (MTR-1-P) into methylthioribulose-1-phosphate (MTRu-1-P). The protein is Methylthioribose-1-phosphate isomerase of Xylella fastidiosa (strain M23).